A 387-amino-acid chain; its full sequence is Patatin group A-2 (387 aa).

Positions 1-23 are cleaved as a signal peptide; sequence MATTKSFLILIVMILATTSSTFA. The PNPLA domain occupies 32 to 230; the sequence is LSIDGGGIKG…TVADPALLSV (199 aa). The GXGXXG motif lies at 36–41; that stretch reads GGGIKG. The GXSXG signature appears at 75–79; that stretch reads GTSTG. The active-site Nucleophile is serine 77. Asparagine 115 carries an N-linked (GlcNAc...) asparagine glycan. Aspartate 216 functions as the Proton acceptor in the catalytic mechanism. The DGA/G signature appears at 216–218; that stretch reads DGA. The stretch at 361-385 forms a coiled coil; that stretch reads ETYEEALKRFAKLLSDRKKLRANKA.

The protein belongs to the patatin family. Tuber and stolon.

The protein resides in the vacuole. Its function is as follows. Probable lipolytic acyl hydrolase (LAH), an activity which is thought to be involved in the response of tubers to pathogens. This is Patatin group A-2 from Solanum tuberosum (Potato).